A 199-amino-acid chain; its full sequence is Recombination protein RecR (199 aa).

The C4-type zinc-finger motif lies at 58–73 (CQRCFHLSSEDLCNIC). Residues 81 to 175 (QTICVVADPR…RVTRIAFGLP (95 aa)) form the Toprim domain.

It belongs to the RecR family.

Its function is as follows. May play a role in DNA repair. It seems to be involved in an RecBC-independent recombinational process of DNA repair. It may act with RecF and RecO. In Synechococcus elongatus (strain ATCC 33912 / PCC 7942 / FACHB-805) (Anacystis nidulans R2), this protein is Recombination protein RecR.